We begin with the raw amino-acid sequence, 201 residues long: Imidazole glycerol phosphate synthase subunit HisH (201 aa).

Residues 1–201 enclose the Glutamine amidotransferase type-1 domain; that stretch reads MIAIIDYGAG…LLKRYEEMIR (201 aa). Cys79 (nucleophile) is an active-site residue. Residues His181 and Glu183 contribute to the active site.

As to quaternary structure, heterodimer of HisH and HisF.

It is found in the cytoplasm. It carries out the reaction 5-[(5-phospho-1-deoxy-D-ribulos-1-ylimino)methylamino]-1-(5-phospho-beta-D-ribosyl)imidazole-4-carboxamide + L-glutamine = D-erythro-1-(imidazol-4-yl)glycerol 3-phosphate + 5-amino-1-(5-phospho-beta-D-ribosyl)imidazole-4-carboxamide + L-glutamate + H(+). The enzyme catalyses L-glutamine + H2O = L-glutamate + NH4(+). The protein operates within amino-acid biosynthesis; L-histidine biosynthesis; L-histidine from 5-phospho-alpha-D-ribose 1-diphosphate: step 5/9. IGPS catalyzes the conversion of PRFAR and glutamine to IGP, AICAR and glutamate. The HisH subunit catalyzes the hydrolysis of glutamine to glutamate and ammonia as part of the synthesis of IGP and AICAR. The resulting ammonia molecule is channeled to the active site of HisF. This is Imidazole glycerol phosphate synthase subunit HisH from Oceanobacillus iheyensis (strain DSM 14371 / CIP 107618 / JCM 11309 / KCTC 3954 / HTE831).